A 436-amino-acid chain; its full sequence is Fasciclin-like arabinogalactan protein 15 (436 aa).

A signal peptide spans 1–20 (MDDLSKLLFFLLLTISITTA). FAS1 domains lie at 31–165 (NSNS…ERLL) and 249–392 (VKDF…DGVL). N-linked (GlcNAc...) asparagine glycosylation is found at N68 and N271.

The protein belongs to the fasciclin-like AGP family.

Its subcellular location is the secreted. May be a cell surface adhesion protein. This Arabidopsis thaliana (Mouse-ear cress) protein is Fasciclin-like arabinogalactan protein 15 (FLA15).